Here is a 383-residue protein sequence, read N- to C-terminus: ATP phosphoribosyltransferase regulatory subunit (383 aa).

It belongs to the class-II aminoacyl-tRNA synthetase family. HisZ subfamily. As to quaternary structure, heteromultimer composed of HisG and HisZ subunits.

Its subcellular location is the cytoplasm. Its pathway is amino-acid biosynthesis; L-histidine biosynthesis; L-histidine from 5-phospho-alpha-D-ribose 1-diphosphate: step 1/9. Its function is as follows. Required for the first step of histidine biosynthesis. May allow the feedback regulation of ATP phosphoribosyltransferase activity by histidine. This chain is ATP phosphoribosyltransferase regulatory subunit, found in Neisseria meningitidis serogroup C (strain 053442).